The following is a 428-amino-acid chain: MKTLIKNGSIVTKEGTVKTQDVLLHDGVISAIGLNLEETDAHVIEANGKLVTPGLVDLHVHLREPGGEAKETIETGTKAAAKGGFTTVAAMPNTRPVPDSAEQMSWLTGRIDETGVVRVLPYAAITTRQLGRELTDFAKLKEAGAFAFTDDGVGVQSAAMMLEAMKEAAKLEMAIVAHCEENTLIQNGSVHEGVFSKKHGIAGIPSVCESVHIARDVLLAEAAGVHYHVCHISTKESVRVVRDAKRAGIRVTAEVTPHHLLLCDEDIPGLDAHYKMNPPLRGKEDREALIEGLLDGTIDFIATDHAPHTEEEKGQGMERAPFGIVGLETAFPLLYTHFVKKGTFTLKQLVDWLTIDPAETFQLPYGRLEEGAPADVTIIDLEAERAIDPAHFASKGRNTPFAGWTCQGWPVATLVGGKLVWEEKEVAR.

The Zn(2+) site is built by His-59 and His-61. Substrate-binding positions include 61–63 (HLR) and Asn-93. Zn(2+) contacts are provided by Asp-151, His-178, and His-231. Asn-277 contributes to the substrate binding site. Asp-304 is a Zn(2+) binding site. Asp-304 is a catalytic residue. Substrate contacts are provided by residues His-308 and 322-323 (FG).

Belongs to the metallo-dependent hydrolases superfamily. DHOase family. Class I DHOase subfamily. Zn(2+) is required as a cofactor.

It catalyses the reaction (S)-dihydroorotate + H2O = N-carbamoyl-L-aspartate + H(+). It participates in pyrimidine metabolism; UMP biosynthesis via de novo pathway; (S)-dihydroorotate from bicarbonate: step 3/3. In terms of biological role, catalyzes the reversible cyclization of carbamoyl aspartate to dihydroorotate. This Halalkalibacterium halodurans (strain ATCC BAA-125 / DSM 18197 / FERM 7344 / JCM 9153 / C-125) (Bacillus halodurans) protein is Dihydroorotase.